We begin with the raw amino-acid sequence, 431 residues long: 5-methylthioadenosine/S-adenosylhomocysteine deaminase (431 aa).

Zn(2+) contacts are provided by H64 and H66. E93, R145, and H183 together coordinate substrate. H210 provides a ligand contact to Zn(2+). The substrate site is built by E213 and D299. Residue D299 participates in Zn(2+) binding.

It belongs to the metallo-dependent hydrolases superfamily. MTA/SAH deaminase family. Zn(2+) serves as cofactor.

The enzyme catalyses S-adenosyl-L-homocysteine + H2O + H(+) = S-inosyl-L-homocysteine + NH4(+). The catalysed reaction is S-methyl-5'-thioadenosine + H2O + H(+) = S-methyl-5'-thioinosine + NH4(+). In terms of biological role, catalyzes the deamination of 5-methylthioadenosine and S-adenosyl-L-homocysteine into 5-methylthioinosine and S-inosyl-L-homocysteine, respectively. Is also able to deaminate adenosine. This Syntrophomonas wolfei subsp. wolfei (strain DSM 2245B / Goettingen) protein is 5-methylthioadenosine/S-adenosylhomocysteine deaminase.